Here is a 244-residue protein sequence, read N- to C-terminus: Multiple organellar RNA editing factor 3, mitochondrial (244 aa).

Residues 1–62 (MALISTRRTL…GPCYISTRPK (62 aa)) constitute a mitochondrion transit peptide. Disordered stretches follow at residues 59 to 82 (TRPK…SNRP) and 196 to 244 (YRFT…KPSA). Over residues 60–80 (RPKTSGSGYSPLNDPSPNWSN) the composition is skewed to polar residues. The span at 210–226 (PRYDRRRETMQVERREP) shows a compositional bias: basic and acidic residues.

This sequence belongs to the MORF family. Heterodimer with MORF1. Homodimer and heterodimers with MORF8/RIP1, MORF4/RIP4 and MORF5/RIP5.

The protein resides in the mitochondrion. Its function is as follows. Involved in organellar RNA editing. Required for the processing of RNA editing sites in mitochondria. The sequence is that of Multiple organellar RNA editing factor 3, mitochondrial from Arabidopsis thaliana (Mouse-ear cress).